Reading from the N-terminus, the 640-residue chain is tRNA-dihydrouridine(47) synthase [NAD(P)(+)]-like (640 aa).

Positions 1–10 are enriched in low complexity; the sequence is MAEVAEVAAE. Disordered regions lie at residues 1–22 and 47–106; these read MAEV…VGAC and DKQE…PHMK. An N-acetylalanine modification is found at alanine 2. A compositionally biased stretch (basic and acidic residues) spans 64 to 91; it reads PEAKRIRLEDGQENGKTEVAVESHERQV. Positions 92–106 are enriched in basic residues; sequence PKRARGQNKSRPHMK. C3H1-type zinc fingers lie at residues 110–140 and 148–178; these read YDKE…HDVG and ADLG…HLGP. Position 267 is a phosphoserine (serine 267). Residues 301 to 303 and glutamine 355 contribute to the FMN site; that span reads PLT. The active-site Proton donor is cysteine 386. Lysine 406 participates in a covalent cross-link: Glycyl lysine isopeptide (Lys-Gly) (interchain with G-Cter in SUMO2). FMN-binding positions include lysine 425, histidine 455, 487-489, and 510-511; these read NGD and AR.

The protein belongs to the Dus family. Dus3 subfamily. FMN serves as cofactor.

It catalyses the reaction 5,6-dihydrouridine(47) in tRNA + NAD(+) = uridine(47) in tRNA + NADH + H(+). The catalysed reaction is 5,6-dihydrouridine(47) in tRNA + NADP(+) = uridine(47) in tRNA + NADPH + H(+). The enzyme catalyses a 5,6-dihydrouridine in mRNA + NAD(+) = a uridine in mRNA + NADH + H(+). It carries out the reaction a 5,6-dihydrouridine in mRNA + NADP(+) = a uridine in mRNA + NADPH + H(+). Its function is as follows. Catalyzes the synthesis of dihydrouridine, a modified base, in various RNAs, such as tRNAs, mRNAs and some long non-coding RNAs (lncRNAs). Mainly modifies the uridine in position 47 (U47) in the D-loop of most cytoplasmic tRNAs. Also able to mediate the formation of dihydrouridine in some mRNAs, thereby regulating their translation. The chain is tRNA-dihydrouridine(47) synthase [NAD(P)(+)]-like from Rattus norvegicus (Rat).